A 391-amino-acid chain; its full sequence is uncharacterized protein (391 aa).

Belongs to the mycobacterial PPE family.

This is an uncharacterized protein from Mycobacterium tuberculosis (strain CDC 1551 / Oshkosh).